The chain runs to 195 residues: Large ribosomal subunit protein uL5 (195 aa).

The tract at residues 1–25 (MARVPPPALKKDKKEKKPPKDNSKN) is disordered.

The protein belongs to the universal ribosomal protein uL5 family. In terms of assembly, component of the large ribosomal subunit.

It is found in the nucleus. It localises to the cytoplasm. Its function is as follows. Component of the ribosome, a large ribonucleoprotein complex responsible for the synthesis of proteins in the cell. The small ribosomal subunit (SSU) binds messenger RNAs (mRNAs) and translates the encoded message by selecting cognate aminoacyl-transfer RNA (tRNA) molecules. The large subunit (LSU) contains the ribosomal catalytic site termed the peptidyl transferase center (PTC), which catalyzes the formation of peptide bonds, thereby polymerizing the amino acids delivered by tRNAs into a polypeptide chain. The nascent polypeptides leave the ribosome through a tunnel in the LSU and interact with protein factors that function in enzymatic processing, targeting, and the membrane insertion of nascent chains at the exit of the ribosomal tunnel. This Spodoptera frugiperda (Fall armyworm) protein is Large ribosomal subunit protein uL5 (RpL11).